The primary structure comprises 206 residues: Transmembrane emp24 domain-containing protein bai (206 aa).

Positions 1-20 (MLKSLLCILLIFGCLCRIHG) are cleaved as a signal peptide. At 21–172 (VMFHLTPNTQ…RDTNEKTNSR (152 aa)) the chain is on the lumenal side. A GOLD domain is found at 30-140 (QKCLKEDIQA…LKPLEVDLKR (111 aa)). The chain crosses the membrane as a helical span at residues 173–193 (VLFFSIFSMCCLLGLATWQVL). Residues 194–206 (YLRRYFKAKKLIE) lie on the Cytoplasmic side of the membrane.

It belongs to the EMP24/GP25L family.

Its subcellular location is the membrane. In terms of biological role, eca and bai are essential, though not redundant, for dorsoventral patterning of the embryo. Specifically required during early embryogenesis for the activity of maternal tkv, while the zygotic tkv is not affected. The polypeptide is Transmembrane emp24 domain-containing protein bai (Drosophila grimshawi (Hawaiian fruit fly)).